A 311-amino-acid polypeptide reads, in one-letter code: Lipoyl synthase (311 aa).

Residues Cys47, Cys52, Cys58, Cys73, Cys77, Cys80, and Ser286 each contribute to the [4Fe-4S] cluster site. A Radical SAM core domain is found at 59-276 (WSRHTATYLA…RSVGESLGLF (218 aa)).

Belongs to the radical SAM superfamily. Lipoyl synthase family. Requires [4Fe-4S] cluster as cofactor.

It localises to the cytoplasm. The catalysed reaction is [[Fe-S] cluster scaffold protein carrying a second [4Fe-4S](2+) cluster] + N(6)-octanoyl-L-lysyl-[protein] + 2 oxidized [2Fe-2S]-[ferredoxin] + 2 S-adenosyl-L-methionine + 4 H(+) = [[Fe-S] cluster scaffold protein] + N(6)-[(R)-dihydrolipoyl]-L-lysyl-[protein] + 4 Fe(3+) + 2 hydrogen sulfide + 2 5'-deoxyadenosine + 2 L-methionine + 2 reduced [2Fe-2S]-[ferredoxin]. It participates in protein modification; protein lipoylation via endogenous pathway; protein N(6)-(lipoyl)lysine from octanoyl-[acyl-carrier-protein]: step 2/2. Catalyzes the radical-mediated insertion of two sulfur atoms into the C-6 and C-8 positions of the octanoyl moiety bound to the lipoyl domains of lipoate-dependent enzymes, thereby converting the octanoylated domains into lipoylated derivatives. This Chlamydia trachomatis serovar D (strain ATCC VR-885 / DSM 19411 / UW-3/Cx) protein is Lipoyl synthase.